The sequence spans 389 residues: S-adenosylmethionine synthase (389 aa).

Histidine 15 is an ATP binding site. Aspartate 17 is a Mg(2+) binding site. Glutamate 43 contacts K(+). L-methionine is bound by residues glutamate 56 and glutamine 99. The segment at 99 to 109 (QSPDIAQGVNE) is flexible loop. Residues 166–168 (DAK), 234–235 (RF), aspartate 243, 249–250 (RK), alanine 266, and lysine 270 contribute to the ATP site. Aspartate 243 contacts L-methionine. Lysine 274 provides a ligand contact to L-methionine.

The protein belongs to the AdoMet synthase family. In terms of assembly, homotetramer; dimer of dimers. Mg(2+) serves as cofactor. K(+) is required as a cofactor.

It is found in the cytoplasm. It carries out the reaction L-methionine + ATP + H2O = S-adenosyl-L-methionine + phosphate + diphosphate. The protein operates within amino-acid biosynthesis; S-adenosyl-L-methionine biosynthesis; S-adenosyl-L-methionine from L-methionine: step 1/1. In terms of biological role, catalyzes the formation of S-adenosylmethionine (AdoMet) from methionine and ATP. The overall synthetic reaction is composed of two sequential steps, AdoMet formation and the subsequent tripolyphosphate hydrolysis which occurs prior to release of AdoMet from the enzyme. This Laribacter hongkongensis (strain HLHK9) protein is S-adenosylmethionine synthase.